A 118-amino-acid chain; its full sequence is Holo-[acyl-carrier-protein] synthase (118 aa).

The Mg(2+) site is built by Asp-8 and Glu-58.

It belongs to the P-Pant transferase superfamily. AcpS family. Mg(2+) serves as cofactor.

It localises to the cytoplasm. The catalysed reaction is apo-[ACP] + CoA = holo-[ACP] + adenosine 3',5'-bisphosphate + H(+). In terms of biological role, transfers the 4'-phosphopantetheine moiety from coenzyme A to a Ser of acyl-carrier-protein. This is Holo-[acyl-carrier-protein] synthase from Streptococcus equi subsp. zooepidemicus (strain H70).